The primary structure comprises 569 residues: Urease subunit alpha (569 aa).

Residues 131-569 (GGIDSHIHFI…LPLAQRYFLF (439 aa)) form the Urease domain. Ni(2+) contacts are provided by H136, H138, and K219. K219 carries the post-translational modification N6-carboxylysine. H221 is a binding site for substrate. 2 residues coordinate Ni(2+): H248 and H274. H322 (proton donor) is an active-site residue. D362 contacts Ni(2+).

It belongs to the metallo-dependent hydrolases superfamily. Urease alpha subunit family. Heterotrimer of UreA (gamma), UreB (beta) and UreC (alpha) subunits. Three heterotrimers associate to form the active enzyme. The cofactor is Ni cation. In terms of processing, carboxylation allows a single lysine to coordinate two nickel ions.

It localises to the cytoplasm. The catalysed reaction is urea + 2 H2O + H(+) = hydrogencarbonate + 2 NH4(+). It functions in the pathway nitrogen metabolism; urea degradation; CO(2) and NH(3) from urea (urease route): step 1/1. The sequence is that of Urease subunit alpha from Herpetosiphon aurantiacus (strain ATCC 23779 / DSM 785 / 114-95).